Reading from the N-terminus, the 350-residue chain is tRNA uridine(34) hydroxylase (350 aa).

The region spanning 146–240 (DDPDAVFIDM…YARRAREQGL (95 aa)) is the Rhodanese domain. Catalysis depends on Cys200, which acts as the Cysteine persulfide intermediate. Residues 319–328 (RRRRAGRENG) are compositionally biased toward basic and acidic residues. The disordered stretch occupies residues 319–350 (RRRRAGRENGNKIFNKSRGRLNSKLSIPDPAE).

Belongs to the TrhO family.

The enzyme catalyses uridine(34) in tRNA + AH2 + O2 = 5-hydroxyuridine(34) in tRNA + A + H2O. Its function is as follows. Catalyzes oxygen-dependent 5-hydroxyuridine (ho5U) modification at position 34 in tRNAs. The protein is tRNA uridine(34) hydroxylase of Salmonella heidelberg (strain SL476).